Reading from the N-terminus, the 315-residue chain is Putative HTH-type transcriptional regulatory protein PF1851 (315 aa).

In terms of domain architecture, HTH cro/C1-type spans 131-189 (LRELREKYGYSTTELAEMLGVSRKSVQRYEKGEGMVSIDVAIRLEEIFDEPLVKPIDIF). Residues 142-161 (TTELAEMLGVSRKSVQRYEK) constitute a DNA-binding region (H-T-H motif).

The sequence is that of Putative HTH-type transcriptional regulatory protein PF1851 from Pyrococcus furiosus (strain ATCC 43587 / DSM 3638 / JCM 8422 / Vc1).